The primary structure comprises 91 residues: Elongation factor 1-beta (91 aa).

Belongs to the EF-1-beta/EF-1-delta family.

Its function is as follows. Promotes the exchange of GDP for GTP in EF-1-alpha/GDP, thus allowing the regeneration of EF-1-alpha/GTP that could then be used to form the ternary complex EF-1-alpha/GTP/AAtRNA. In Thermofilum pendens (strain DSM 2475 / Hrk 5), this protein is Elongation factor 1-beta.